Here is a 90-residue protein sequence, read N- to C-terminus: Small ribosomal subunit protein bS6 (90 aa).

Residue K33 forms an Isoglutamyl lysine isopeptide (Lys-Gln) (interchain with Q-Cter in protein Pup) linkage.

The protein belongs to the bacterial ribosomal protein bS6 family.

In terms of biological role, binds together with bS18 to 16S ribosomal RNA. The polypeptide is Small ribosomal subunit protein bS6 (rpsF) (Mycolicibacterium smegmatis (strain ATCC 700084 / mc(2)155) (Mycobacterium smegmatis)).